Consider the following 364-residue polypeptide: Phospho-N-acetylmuramoyl-pentapeptide-transferase (364 aa).

10 helical membrane passes run 18-38 (SLLI…AQIL), 48-68 (LFPL…VVPV), 91-111 (GTPT…ALIW), 114-134 (LDPA…IGWI), 154-174 (LILQ…TQSA), 183-203 (GQII…VLVA), 214-234 (VDGL…ALMA), 237-257 (NPGL…FIVH), 280-300 (AIGI…IFFV), and 343-363 (TQIV…AVIS).

This sequence belongs to the glycosyltransferase 4 family. MraY subfamily. It depends on Mg(2+) as a cofactor.

The protein localises to the cell inner membrane. It catalyses the reaction UDP-N-acetyl-alpha-D-muramoyl-L-alanyl-gamma-D-glutamyl-meso-2,6-diaminopimeloyl-D-alanyl-D-alanine + di-trans,octa-cis-undecaprenyl phosphate = di-trans,octa-cis-undecaprenyl diphospho-N-acetyl-alpha-D-muramoyl-L-alanyl-D-glutamyl-meso-2,6-diaminopimeloyl-D-alanyl-D-alanine + UMP. Its pathway is cell wall biogenesis; peptidoglycan biosynthesis. In terms of biological role, catalyzes the initial step of the lipid cycle reactions in the biosynthesis of the cell wall peptidoglycan: transfers peptidoglycan precursor phospho-MurNAc-pentapeptide from UDP-MurNAc-pentapeptide onto the lipid carrier undecaprenyl phosphate, yielding undecaprenyl-pyrophosphoryl-MurNAc-pentapeptide, known as lipid I. The sequence is that of Phospho-N-acetylmuramoyl-pentapeptide-transferase from Rippkaea orientalis (strain PCC 8801 / RF-1) (Cyanothece sp. (strain PCC 8801)).